Consider the following 180-residue polypeptide: Large ribosomal subunit protein uL6 (180 aa).

It belongs to the universal ribosomal protein uL6 family. Part of the 50S ribosomal subunit.

This protein binds to the 23S rRNA, and is important in its secondary structure. It is located near the subunit interface in the base of the L7/L12 stalk, and near the tRNA binding site of the peptidyltransferase center. In Mesoplasma florum (strain ATCC 33453 / NBRC 100688 / NCTC 11704 / L1) (Acholeplasma florum), this protein is Large ribosomal subunit protein uL6.